Reading from the N-terminus, the 272-residue chain is Rhomboid-type serine protease B (272 aa).

A run of 5 helical transmembrane segments spans residues 30–50 (IVLL…WSVV), 72–92 (PFIH…TPLL), 103–123 (TAVA…YILV), 133–153 (AVVG…IKTF), and 164–184 (TKIP…IFVP). The active-site Nucleophile is Ser138. Asn185 carries an N-linked (GlcNAc...) asparagine glycan. A helical membrane pass occupies residues 186–206 (TSFLGHLSAIIIGYLLGLGYL). His191 is a catalytic residue.

It belongs to the peptidase S54 family.

Its subcellular location is the membrane. It catalyses the reaction Cleaves type-1 transmembrane domains using a catalytic dyad composed of serine and histidine that are contributed by different transmembrane domains.. Functionally, rhomboid protease that catalyzes intramembrane proteolysis. Required for transcription factor srbA activation by mediating its release from the membrane and thereby regulating its activity under hypoxic conditions. Essential for iron homeostasis and resistance to azoles such as voriconazole. Required for virulence in murine models of invasive pulmonary aspergillosis (IPA). In Aspergillus fumigatus (strain CBS 144.89 / FGSC A1163 / CEA10) (Neosartorya fumigata), this protein is Rhomboid-type serine protease B.